The chain runs to 246 residues: MSKQKDKERIHEKRRAKFQELQNKIGITFRNEKLLIQAFTHSSYVNEHRRRLHEDNERLEFLGDAVLELTVSQYLFQKFPHMSEGQLTKLRAAIVCEPSLVKFANALSFGELVLLGKGEELTGGRTRPALLADVFEAFIGALYLDQGMDAVIRFLEKTMFPKIDEGAFSHVMDFKSQLQELVQRDGSGTLEYAILEEKGPAHNKEFVARVALNGQELGIGVGRSKKEAEQHAAQMALETLRAADQQ.

An RNase III domain is found at 18-147 (FQELQNKIGI…FIGALYLDQG (130 aa)). Glutamate 60 contacts Mg(2+). The active site involves aspartate 64. Aspartate 133 and glutamate 136 together coordinate Mg(2+). Residue glutamate 136 is part of the active site. The DRBM domain maps to 173–242 (DFKSQLQELV…AQMALETLRA (70 aa)).

It belongs to the ribonuclease III family. In terms of assembly, homodimer. Mg(2+) is required as a cofactor.

It is found in the cytoplasm. It catalyses the reaction Endonucleolytic cleavage to 5'-phosphomonoester.. Functionally, digests double-stranded RNA. Involved in the processing of primary rRNA transcript to yield the immediate precursors to the large and small rRNAs (23S and 16S). Processes some mRNAs, and tRNAs when they are encoded in the rRNA operon. Processes pre-crRNA and tracrRNA of type II CRISPR loci if present in the organism. The polypeptide is Ribonuclease 3 (Geobacillus kaustophilus (strain HTA426)).